We begin with the raw amino-acid sequence, 141 residues long: MLTADDKKLLAQLWEKVAGHQDEFGNEALQRMFVTYPQTKTYFPHFDLHPGSEQVRSHGKKVAAALGNAVKSLDNISQALSELSNLHAYNLRVDPANFKLLSQCFQVVLAVHLGKDYTPEMHAAFDKFLSAVAAVLAEKYR.

The 141-residue stretch at Met-1–Arg-141 folds into the Globin domain. 2 residues coordinate heme b: His-58 and His-87.

It belongs to the globin family. In terms of assembly, heterotetramer of two alpha-D chains and two beta chains. In terms of tissue distribution, red blood cells.

Functionally, involved in oxygen transport from the lung to the various peripheral tissues. This is Hemoglobin subunit alpha-D (HBAD) from Anser anser anser (Western greylag goose).